The chain runs to 1578 residues: BRD4-interacting chromatin-remodeling complex-associated protein (1578 aa).

3 disordered regions span residues 80-101, 631-673, and 725-951; these read DILG…DQPC, PAVT…PSLA, and IVSA…PPPR. Residues 86 to 96 show a composition bias toward gly residues; it reads AAGGGGGGGGA. Low complexity-rich tracts occupy residues 631–662 and 764–782; these read PAVT…TQPQ and IPAA…PSLP. Pro residues-rich tracts occupy residues 793 to 816, 824 to 841, and 865 to 888; these read MPSP…PPSQ, PSEP…PPTL, and PGPP…PASH. The span at 889 to 906 shows a compositional bias: low complexity; it reads LPPASTPSAVASSSEPSA. S929 carries the phosphoserine modification. T931 is subject to Phosphothreonine. A compositionally biased stretch (pro residues) spans 942–951; it reads PTAPPPPPPR. Residue K1067 is modified to N6-acetyllysine. The tract at residues 1206–1316 is disordered; the sequence is EKPDEYVSSS…NRPPIKTYEA (111 aa). Composition is skewed to low complexity over residues 1233–1247 and 1275–1294; these read SHGQ…GTSA and ASSS…AASS. Residue K1327 forms a Glycyl lysine isopeptide (Lys-Gly) (interchain with G-Cter in SUMO2) linkage. Disordered regions lie at residues 1342-1435 and 1457-1578; these read DPVH…PTKV and VLKG…TLNR. A compositionally biased stretch (pro residues) spans 1346–1370; sequence QPLPAPTPAKGAEPPPHPAPPPLPP. S1427 is modified (phosphoserine). Residues 1502–1532 are compositionally biased toward polar residues; sequence ASFSSDSPQDDTLTEHLQSAIDSILNLQQAP. Over residues 1538-1553 the composition is skewed to pro residues; sequence GPYPHTGPTPGTPTSP.

Component of the multiprotein chromatin-remodeling complexes SWI/SNF: SWI/SNF-A (BAF), SWI/SNF-B (PBAF) and related complexes. The canonical complex contains a catalytic subunit (either SMARCA4/BRG1/BAF190A or SMARCA2/BRM/BAF190B) and at least SMARCE1, ACTL6A/BAF53, SMARCC1/BAF155, SMARCC2/BAF170, and SMARCB1/SNF5/BAF47. Other subunits specific to each of the complexes may also be present permitting several possible combinations developmentally and tissue specific. Component of the SWI/SNF (GBAF) subcomplex, which includes at least BICRA or BICRAL (mutually exclusive), BRD9, SS18, the core BAF subunits, SMARCA2/BRM, SMARCA4/BRG1/BAF190A, ACTL6A/BAF53, SMARCC1/BAF155, and SMARCD1/BAF60A. Interacts with BRD4; the interaction bridges BRD4 to the GBAF complex.

It is found in the nucleus. Its function is as follows. Component of SWI/SNF chromatin remodeling subcomplex GBAF that carries out key enzymatic activities, changing chromatin structure by altering DNA-histone contacts within a nucleosome in an ATP-dependent manner. May play a role in BRD4-mediated gene transcription. This is BRD4-interacting chromatin-remodeling complex-associated protein from Mus musculus (Mouse).